The sequence spans 132 residues: Small ribosomal subunit protein uS11 (132 aa).

The disordered stretch occupies residues 1 to 24; sequence MAAPKQAARKPRRRDRKSVPVGQA. The segment covering 7–16 has biased composition (basic residues); that stretch reads AARKPRRRDR.

Belongs to the universal ribosomal protein uS11 family. In terms of assembly, part of the 30S ribosomal subunit. Interacts with proteins S7 and S18. Binds to IF-3.

Its function is as follows. Located on the platform of the 30S subunit, it bridges several disparate RNA helices of the 16S rRNA. Forms part of the Shine-Dalgarno cleft in the 70S ribosome. The protein is Small ribosomal subunit protein uS11 of Bifidobacterium longum (strain DJO10A).